The chain runs to 368 residues: N-acetylneuraminate epimerase (368 aa).

The signal sequence occupies residues 1-19 (MNKTITALAIMMASFAANA). 7 Kelch repeats span residues 40 to 84 (TVYI…AFID), 86 to 137 (NLYV…FVHN), 139 to 173 (KAYV…KINA), 174 to 219 (YYFD…VNKG), 222 to 265 (TWLI…VAGG), 287 to 336 (ENYQ…PWNN), and 338 to 367 (LLII…VTVQ). E228 functions as the Proton acceptor in the catalytic mechanism.

The protein belongs to the NanM family. In terms of assembly, homodimer.

Its subcellular location is the periplasm. It carries out the reaction N-acetyl-alpha-neuraminate = N-acetyl-beta-neuraminate. Converts alpha-N-acetylneuranimic acid (Neu5Ac) to the beta-anomer, accelerating the equilibrium between the alpha- and beta-anomers. Probably facilitates sialidase-negative bacteria to compete successfully for limited amounts of extracellular Neu5Ac, which is likely taken up in the beta-anomer. In addition, the rapid removal of sialic acid from solution might be advantageous to the bacterium to damp down host responses. The sequence is that of N-acetylneuraminate epimerase from Shigella boydii serotype 4 (strain Sb227).